We begin with the raw amino-acid sequence, 264 residues long: Small ribosomal subunit protein eS1 (264 aa).

Lys34 carries the N6-acetyllysine; alternate modification. Lys34 is covalently cross-linked (Glycyl lysine isopeptide (Lys-Gly) (interchain with G-Cter in SUMO2); alternate). Lys56 carries the N6-acetyllysine modification. Residue Tyr155 is modified to ADP-ribosyltyrosine. A disordered region spans residues 232 to 264 (HGEGSSSGKATGDETGAKVERADGYEPPVQESV). Residues Ser236 and Ser237 each carry the phosphoserine modification. The span at 242–255 (TGDETGAKVERADG) shows a compositional bias: basic and acidic residues. Lys249 carries the N6-acetyllysine; alternate modification. A Glycyl lysine isopeptide (Lys-Gly) (interchain with G-Cter in SUMO2); alternate cross-link involves residue Lys249. Residue Tyr256 is modified to Phosphotyrosine. Ser263 is modified (phosphoserine).

It belongs to the eukaryotic ribosomal protein eS1 family. As to quaternary structure, component of the small ribosomal subunit. Mature ribosomes consist of a small (40S) and a large (60S) subunit. The 40S subunit contains about 33 different proteins and 1 molecule of RNA (18S). The 60S subunit contains about 49 different proteins and 3 molecules of RNA (28S, 5.8S and 5S). Identified in a IGF2BP1-dependent mRNP granule complex containing untranslated mRNAs. Binds with high affinity to IPO4. Interacts with DDIT3. Part of the small subunit (SSU) processome, composed of more than 70 proteins and the RNA chaperone small nucleolar RNA (snoRNA) U3. In terms of processing, ADP-ribosylated at Tyr-155 by PARP1 in presence of HPF1.

It is found in the cytoplasm. The protein localises to the nucleus. The protein resides in the nucleolus. In terms of biological role, component of the small ribosomal subunit. The ribosome is a large ribonucleoprotein complex responsible for the synthesis of proteins in the cell. Part of the small subunit (SSU) processome, first precursor of the small eukaryotic ribosomal subunit. During the assembly of the SSU processome in the nucleolus, many ribosome biogenesis factors, an RNA chaperone and ribosomal proteins associate with the nascent pre-rRNA and work in concert to generate RNA folding, modifications, rearrangements and cleavage as well as targeted degradation of pre-ribosomal RNA by the RNA exosome. May play a role during erythropoiesis through regulation of transcription factor DDIT3. The sequence is that of Small ribosomal subunit protein eS1 from Macaca fascicularis (Crab-eating macaque).